A 329-amino-acid polypeptide reads, in one-letter code: BTB/POZ domain-containing protein At1g55760 (329 aa).

Residues 164–231 (TDITINASDG…IYGNIQNEDF (68 aa)) form the BTB domain.

It participates in protein modification; protein ubiquitination. Its function is as follows. May act as a substrate-specific adapter of an E3 ubiquitin-protein ligase complex (CUL3-RBX1-BTB) which mediates the ubiquitination and subsequent proteasomal degradation of target proteins. This Arabidopsis thaliana (Mouse-ear cress) protein is BTB/POZ domain-containing protein At1g55760.